Reading from the N-terminus, the 99-residue chain is Aspartyl/glutamyl-tRNA(Asn/Gln) amidotransferase subunit C (99 aa).

Belongs to the GatC family. In terms of assembly, heterotrimer of A, B and C subunits.

The enzyme catalyses L-glutamyl-tRNA(Gln) + L-glutamine + ATP + H2O = L-glutaminyl-tRNA(Gln) + L-glutamate + ADP + phosphate + H(+). It catalyses the reaction L-aspartyl-tRNA(Asn) + L-glutamine + ATP + H2O = L-asparaginyl-tRNA(Asn) + L-glutamate + ADP + phosphate + 2 H(+). Its function is as follows. Allows the formation of correctly charged Asn-tRNA(Asn) or Gln-tRNA(Gln) through the transamidation of misacylated Asp-tRNA(Asn) or Glu-tRNA(Gln) in organisms which lack either or both of asparaginyl-tRNA or glutaminyl-tRNA synthetases. The reaction takes place in the presence of glutamine and ATP through an activated phospho-Asp-tRNA(Asn) or phospho-Glu-tRNA(Gln). This chain is Aspartyl/glutamyl-tRNA(Asn/Gln) amidotransferase subunit C, found in Cupriavidus taiwanensis (strain DSM 17343 / BCRC 17206 / CCUG 44338 / CIP 107171 / LMG 19424 / R1) (Ralstonia taiwanensis (strain LMG 19424)).